The following is a 299-amino-acid chain: S-fimbrial protein subunit SfaH (299 aa).

It belongs to the fimbrial protein family.

Its subcellular location is the fimbrium. In terms of biological role, fimbriae (also called pili), polar filaments radiating from the surface of the bacterium to a length of 0.5-1.5 micrometers and numbering 100-300 per cell, enable bacteria to colonize the epithelium of specific host organs. A minor fimbrial subunit. This protein is necessary for full expression of S-specific binding. S-fimbrial adhesins enable pathogenic E.coli causing urinary-tract infections or newborn meningitis to attach to glycoproteins terminating with alpha-sialic acid-(2-3)-beta-Gal. This Escherichia coli O6:K15:H31 (strain 536 / UPEC) protein is S-fimbrial protein subunit SfaH (sfaH).